Consider the following 187-residue polypeptide: NADH-quinone oxidoreductase subunit B (187 aa).

[4Fe-4S] cluster-binding residues include Cys51, Cys52, Cys117, and Cys149.

It belongs to the complex I 20 kDa subunit family. NDH-1 is composed of 14 different subunits. Subunits NuoB, C, D, E, F, and G constitute the peripheral sector of the complex. [4Fe-4S] cluster is required as a cofactor.

Its subcellular location is the cell inner membrane. The enzyme catalyses a quinone + NADH + 5 H(+)(in) = a quinol + NAD(+) + 4 H(+)(out). In terms of biological role, NDH-1 shuttles electrons from NADH, via FMN and iron-sulfur (Fe-S) centers, to quinones in the respiratory chain. The immediate electron acceptor for the enzyme in this species is believed to be ubiquinone. Couples the redox reaction to proton translocation (for every two electrons transferred, four hydrogen ions are translocated across the cytoplasmic membrane), and thus conserves the redox energy in a proton gradient. This is NADH-quinone oxidoreductase subunit B from Nitratidesulfovibrio vulgaris (strain DSM 19637 / Miyazaki F) (Desulfovibrio vulgaris).